The sequence spans 225 residues: Holliday junction branch migration complex subunit RuvA (225 aa).

Residues 1–71 form a domain I region; that stretch reads MISWINGELV…EDSDLLFGFT (71 aa). The segment at 72 to 150 is domain II; that stretch reads SKDQKFFFIE…SKIQIEEEKG (79 aa). The tract at residues 151 to 161 is flexible linker; it reads QEEFEITNPEI. A domain III region spans residues 161–225; that stretch reads IYKLMEDLQL…LDQGNSNLAR (65 aa).

This sequence belongs to the RuvA family. In terms of assembly, homotetramer. Forms an RuvA(8)-RuvB(12)-Holliday junction (HJ) complex. HJ DNA is sandwiched between 2 RuvA tetramers; dsDNA enters through RuvA and exits via RuvB. An RuvB hexamer assembles on each DNA strand where it exits the tetramer. Each RuvB hexamer is contacted by two RuvA subunits (via domain III) on 2 adjacent RuvB subunits; this complex drives branch migration. In the full resolvosome a probable DNA-RuvA(4)-RuvB(12)-RuvC(2) complex forms which resolves the HJ.

It localises to the cytoplasm. In terms of biological role, the RuvA-RuvB-RuvC complex processes Holliday junction (HJ) DNA during genetic recombination and DNA repair, while the RuvA-RuvB complex plays an important role in the rescue of blocked DNA replication forks via replication fork reversal (RFR). RuvA specifically binds to HJ cruciform DNA, conferring on it an open structure. The RuvB hexamer acts as an ATP-dependent pump, pulling dsDNA into and through the RuvAB complex. HJ branch migration allows RuvC to scan DNA until it finds its consensus sequence, where it cleaves and resolves the cruciform DNA. The polypeptide is Holliday junction branch migration complex subunit RuvA (Prochlorococcus marinus (strain MIT 9215)).